We begin with the raw amino-acid sequence, 951 residues long: 2-oxoglutarate dehydrogenase E1 component (951 aa).

The disordered stretch occupies residues Arg-906–Ala-925.

It belongs to the alpha-ketoglutarate dehydrogenase family. Homodimer. Part of the 2-oxoglutarate dehydrogenase (OGDH) complex composed of E1 (2-oxoglutarate dehydrogenase), E2 (dihydrolipoamide succinyltransferase) and E3 (dihydrolipoamide dehydrogenase); the complex contains multiple copies of the three enzymatic components (E1, E2 and E3). The cofactor is thiamine diphosphate.

The catalysed reaction is N(6)-[(R)-lipoyl]-L-lysyl-[protein] + 2-oxoglutarate + H(+) = N(6)-[(R)-S(8)-succinyldihydrolipoyl]-L-lysyl-[protein] + CO2. Its function is as follows. E1 component of the 2-oxoglutarate dehydrogenase (OGDH) complex which catalyzes the decarboxylation of 2-oxoglutarate, the first step in the conversion of 2-oxoglutarate to succinyl-CoA and CO(2). The chain is 2-oxoglutarate dehydrogenase E1 component from Exiguobacterium sp. (strain ATCC BAA-1283 / AT1b).